The sequence spans 474 residues: Chromosomal replication initiator protein DnaA (474 aa).

The interval 1–73 is domain I, interacts with DnaA modulators; sequence MTNIEQERWS…LSCWQAEMPE (73 aa). Residues 73-130 form a domain II region; that stretch reads EVHRIDLTVRTAMRCAAPAKEQAAPIEPRREDNRAAAHDLRVSATAPVSANHEALGGS. Residues 131–353 are domain III, AAA+ region; that stretch reads PLDPRLTFSS…GAINRLLAHS (223 aa). Residues Gly-178, Gly-180, Lys-181, and Thr-182 each coordinate ATP. The segment at 354-474 is domain IV, binds dsDNA; it reads KLNAQPVTLE…VESLKRQLQE (121 aa).

It belongs to the DnaA family. In terms of assembly, oligomerizes as a right-handed, spiral filament on DNA at oriC.

Its subcellular location is the cytoplasm. In terms of biological role, plays an essential role in the initiation and regulation of chromosomal replication. ATP-DnaA binds to the origin of replication (oriC) to initiate formation of the DNA replication initiation complex once per cell cycle. Binds the DnaA box (a 9 base pair repeat at the origin) and separates the double-stranded (ds)DNA. Forms a right-handed helical filament on oriC DNA; dsDNA binds to the exterior of the filament while single-stranded (ss)DNA is stabiized in the filament's interior. The ATP-DnaA-oriC complex binds and stabilizes one strand of the AT-rich DNA unwinding element (DUE), permitting loading of DNA polymerase. After initiation quickly degrades to an ADP-DnaA complex that is not apt for DNA replication. Binds acidic phospholipids. The protein is Chromosomal replication initiator protein DnaA of Rhodopseudomonas palustris (strain BisA53).